The chain runs to 566 residues: Putative ABC transporter ATP-binding protein lp_0149 (566 aa).

2 ABC transporter domains span residues 6–247 (ISFK…GLRE) and 302–536 (LAIE…ASLA). Residues 40-47 (GPSGSGKS) and 335-342 (GQNGTGKS) contribute to the ATP site.

This sequence belongs to the ABC transporter superfamily.

The protein resides in the cell membrane. Its function is as follows. Probably part of an ABC transporter complex. Responsible for energy coupling to the transport system. The protein is Putative ABC transporter ATP-binding protein lp_0149 of Lactiplantibacillus plantarum (strain ATCC BAA-793 / NCIMB 8826 / WCFS1) (Lactobacillus plantarum).